A 259-amino-acid chain; its full sequence is Exotoxin A regulatory protein (259 aa).

The protein localises to the cell inner membrane. Its function is as follows. Positive regulation of toxA gene transcription. The chain is Exotoxin A regulatory protein (toxR) from Pseudomonas aeruginosa (strain ATCC 15692 / DSM 22644 / CIP 104116 / JCM 14847 / LMG 12228 / 1C / PRS 101 / PAO1).